Here is a 448-residue protein sequence, read N- to C-terminus: Putative diacyglycerol O-acyltransferase MT3848 (448 aa).

Catalysis depends on H136, which acts as the Proton acceptor.

The protein belongs to the long-chain O-acyltransferase family.

The catalysed reaction is an acyl-CoA + a 1,2-diacyl-sn-glycerol = a triacyl-sn-glycerol + CoA. The protein operates within glycerolipid metabolism; triacylglycerol biosynthesis. This chain is Putative diacyglycerol O-acyltransferase MT3848, found in Mycobacterium tuberculosis (strain CDC 1551 / Oshkosh).